The primary structure comprises 861 residues: Semaphorin-4D (861 aa).

The first 23 residues, 1 to 23 (MRMCAPVRGLFLALVVVLRTAVA), serve as a signal peptide directing secretion. The region spanning 24 to 500 (FAPVPRLTWE…SNSGVVQAPL (477 aa)) is the Sema domain. The Extracellular portion of the chain corresponds to 24–733 (FAPVPRLTWE…TVYLKSSDNR (710 aa)). 2 N-linked (GlcNAc...) asparagine glycosylation sites follow: asparagine 49 and asparagine 77. 2 cysteine pairs are disulfide-bonded: cysteine 97–cysteine 108 and cysteine 126–cysteine 135. Residues asparagine 139 and asparagine 191 are each glycosylated (N-linked (GlcNAc...) asparagine). 2 cysteine pairs are disulfide-bonded: cysteine 257–cysteine 370 and cysteine 281–cysteine 326. N-linked (GlcNAc...) asparagine glycans are attached at residues asparagine 379 and asparagine 419. Residues 502 to 551 (FCEKHGSCEDCVLARDPYCAWSPAIKACVTLHQEEASSRGWIQDMSGDTS) enclose the PSI domain. 4 disulfides stabilise this stretch: cysteine 503–cysteine 520, cysteine 509–cysteine 553, cysteine 512–cysteine 529, and cysteine 576–cysteine 624. In terms of domain architecture, Ig-like C2-type spans 555–636 (DKSKESFNQH…EERVRNKTVS (82 aa)). N-linked (GlcNAc...) asparagine glycosylation is found at asparagine 613 and asparagine 632. The tract at residues 649-709 (VPRTPPSPTS…KSSSGTSCEP (61 aa)) is disordered. The segment covering 657–681 (TSEDAQTEGSKITSKMPVASTQGSS) has biased composition (polar residues). Residues 734-754 (LLMSLLLFIFVLFLCLFSYNC) form a helical membrane-spanning segment. The Cytoplasmic segment spans residues 755–861 (YKGYLPGQCL…KFADSDADGD (107 aa)). 2 positions are modified to phosphoserine: serine 782 and serine 832. Positions 793 to 839 (VEPGSFSQQNGDHPKPALDTGYETEQDTITSKVPTDREDSQRIDELS) are disordered. A compositionally biased stretch (basic and acidic residues) spans 826-839 (PTDREDSQRIDELS).

It belongs to the semaphorin family. As to quaternary structure, homodimer. Interacts with PLXNB1. Interacts with PLXNB2. Strongly expressed in lymphoid tissues, especially in the thymus, as well as in the nervous tissues. Expressed in neurons and glia in the developing hippocampus.

The protein localises to the cell membrane. In terms of biological role, cell surface receptor for PLXNB1 and PLXNB2 that plays an important role in cell-cell signaling. Regulates GABAergic synapse development. Promotes the development of inhibitory synapses in a PLXNB1-dependent manner. Modulates the complexity and arborization of developing neurites in hippocampal neurons by activating PLXNB1 and interaction with PLXNB1 mediates activation of RHOA. Promotes the migration of cerebellar granule cells. Plays a role in the immune system; induces B-cells to aggregate and improves their viability (in vitro). Induces endothelial cell migration through the activation of PTK2B/PYK2, SRC, and the phosphatidylinositol 3-kinase-AKT pathway. This Mus musculus (Mouse) protein is Semaphorin-4D (Sema4d).